Here is a 632-residue protein sequence, read N- to C-terminus: 1-deoxy-D-xylulose-5-phosphate synthase (632 aa).

Thiamine diphosphate contacts are provided by residues His-79 and 120-122; that span reads GHA. Mg(2+) is bound at residue Asp-152. Thiamine diphosphate-binding positions include 153 to 154, Asn-181, Phe-293, and Glu-377; that span reads GS. Asn-181 contributes to the Mg(2+) binding site.

This sequence belongs to the transketolase family. DXPS subfamily. In terms of assembly, homodimer. It depends on Mg(2+) as a cofactor. The cofactor is thiamine diphosphate.

The enzyme catalyses D-glyceraldehyde 3-phosphate + pyruvate + H(+) = 1-deoxy-D-xylulose 5-phosphate + CO2. It functions in the pathway metabolic intermediate biosynthesis; 1-deoxy-D-xylulose 5-phosphate biosynthesis; 1-deoxy-D-xylulose 5-phosphate from D-glyceraldehyde 3-phosphate and pyruvate: step 1/1. Catalyzes the acyloin condensation reaction between C atoms 2 and 3 of pyruvate and glyceraldehyde 3-phosphate to yield 1-deoxy-D-xylulose-5-phosphate (DXP). This chain is 1-deoxy-D-xylulose-5-phosphate synthase, found in Phocaeicola vulgatus (strain ATCC 8482 / DSM 1447 / JCM 5826 / CCUG 4940 / NBRC 14291 / NCTC 11154) (Bacteroides vulgatus).